The sequence spans 684 residues: Glycine--tRNA ligase beta subunit (684 aa).

Belongs to the class-II aminoacyl-tRNA synthetase family. In terms of assembly, tetramer of two alpha and two beta subunits.

The protein localises to the cytoplasm. It catalyses the reaction tRNA(Gly) + glycine + ATP = glycyl-tRNA(Gly) + AMP + diphosphate. This Pseudomonas fluorescens (strain ATCC BAA-477 / NRRL B-23932 / Pf-5) protein is Glycine--tRNA ligase beta subunit.